We begin with the raw amino-acid sequence, 232 residues long: Small ribosomal subunit protein uS3 (232 aa).

In terms of domain architecture, KH type-2 spans 39–107; sequence VRQFLTKELA…PAQINIAEVR (69 aa).

The protein belongs to the universal ribosomal protein uS3 family. As to quaternary structure, part of the 30S ribosomal subunit. Forms a tight complex with proteins S10 and S14.

Its function is as follows. Binds the lower part of the 30S subunit head. Binds mRNA in the 70S ribosome, positioning it for translation. This Yersinia pestis bv. Antiqua (strain Antiqua) protein is Small ribosomal subunit protein uS3.